The sequence spans 172 residues: Signal peptidase complex catalytic subunit SEC11 (172 aa).

The Cytoplasmic portion of the chain corresponds to 1–14; it reads MLSSLGNPRQAAAQ. The helical; Signal-anchor for type II membrane protein transmembrane segment at 15–35 threads the bilayer; sequence LMNFALILSTAFMMWKGLSVI. Residues 36–172 are Lumenal-facing; the sequence is TDSPSPIVVV…MGLLVVLQRE (137 aa). Catalysis depends on charge relay system residues Ser49 and His90. A glycan (N-linked (GlcNAc...) asparagine) is linked at Asn111. The active-site Charge relay system is Asp115. The tract at residues 158–169 is C-terminal short (CTS) helix; sequence VMLGIMGLLVVL.

It belongs to the peptidase S26B family. As to quaternary structure, component of the signal peptidase complex (SPC) composed of a catalytic subunit SEC11 and three accessory subunits SPC1, SPC2 and SPC3. The complex induces a local thinning of the ER membrane which is used to measure the length of the signal peptide (SP) h-region of protein substrates. This ensures the selectivity of the complex towards h-regions shorter than 18-20 amino acids. SPC associates with the translocon complex.

Its subcellular location is the endoplasmic reticulum membrane. The catalysed reaction is Cleavage of hydrophobic, N-terminal signal or leader sequences from secreted and periplasmic proteins.. Functionally, catalytic component of the signal peptidase complex (SPC) which catalyzes the cleavage of N-terminal signal sequences from nascent proteins as they are translocated into the lumen of the endoplasmic reticulum. Specifically cleaves N-terminal signal peptides that contain a hydrophobic alpha-helix (h-region) shorter than 18-20 amino acids. In Fusarium vanettenii (strain ATCC MYA-4622 / CBS 123669 / FGSC 9596 / NRRL 45880 / 77-13-4) (Fusarium solani subsp. pisi), this protein is Signal peptidase complex catalytic subunit SEC11 (SEC11).